Here is a 248-residue protein sequence, read N- to C-terminus: ATP synthase subunit a, chloroplastic (248 aa).

Helical transmembrane passes span Gln-38–Val-58, Val-96–Val-116, Ile-135–Ala-155, Leu-200–Leu-220, and Gly-221–Gly-241.

Belongs to the ATPase A chain family. F-type ATPases have 2 components, CF(1) - the catalytic core - and CF(0) - the membrane proton channel. CF(1) has five subunits: alpha(3), beta(3), gamma(1), delta(1), epsilon(1). CF(0) has four main subunits: a, b, b' and c.

It localises to the plastid. The protein localises to the chloroplast thylakoid membrane. Functionally, key component of the proton channel; it plays a direct role in the translocation of protons across the membrane. This Welwitschia mirabilis (Tree tumbo) protein is ATP synthase subunit a, chloroplastic.